The sequence spans 286 residues: MTAQTIDGKAIAQSIRTQLKEKVTARKEAGKRVPGLAVILVGADPASQVYVGSKRRACEEVGFLSRSYDLESSTTEEQLLSLIDECNQDPAIDGILVQLPLPEHIEESKVIERIRPDKDVDGFHPYNVGRLAQRIPVLRSCTPMGIMTLIKSTGVDTYGLDALVVGASNIVGRPMSLELLLAGCTTTTCHRFTRNLEQKVRQADLVVVAVGKPGFIPGEWIKPGALVIDVGINRLEDGSLVGDVQYDVAAQNASFITPVPGGVGPMTIASLLENTLYAAEQYHDEA.

NADP(+)-binding positions include 166–168 and Ile232; that span reads GAS.

It belongs to the tetrahydrofolate dehydrogenase/cyclohydrolase family. Homodimer.

The catalysed reaction is (6R)-5,10-methylene-5,6,7,8-tetrahydrofolate + NADP(+) = (6R)-5,10-methenyltetrahydrofolate + NADPH. It carries out the reaction (6R)-5,10-methenyltetrahydrofolate + H2O = (6R)-10-formyltetrahydrofolate + H(+). It functions in the pathway one-carbon metabolism; tetrahydrofolate interconversion. In terms of biological role, catalyzes the oxidation of 5,10-methylenetetrahydrofolate to 5,10-methenyltetrahydrofolate and then the hydrolysis of 5,10-methenyltetrahydrofolate to 10-formyltetrahydrofolate. This Shewanella woodyi (strain ATCC 51908 / MS32) protein is Bifunctional protein FolD.